The sequence spans 268 residues: L-gamma-glutamyl-L-propargylglycine hydroxylase (268 aa).

The cofactor is Fe(2+).

The enzyme catalyses L-gamma-glutamyl-L-propargylglycine + 2-oxoglutarate + O2 = L-gamma-glutamyl-(3R)-L-beta-ethynylserine + succinate + CO2. Its pathway is amino-acid metabolism. The protein operates within antibiotic biosynthesis. In terms of biological role, involved in the biosynthesis of terminal alkyne-containing amino acids such as L-beta-ethynylserine, that are produced as antibiotics by S.cattleya. Catalyzes the hydroxylation of the dipeptide L-gamma-glutamyl-L-propargylglycine, leading to L-gamma-glutamyl-L-beta-ethynylserine. Cannot use L-propargylglycine as substrate. This Streptantibioticus cattleyicolor (strain ATCC 35852 / DSM 46488 / JCM 4925 / NBRC 14057 / NRRL 8057) (Streptomyces cattleya) protein is L-gamma-glutamyl-L-propargylglycine hydroxylase.